Consider the following 1081-residue polypeptide: Carbamoyl phosphate synthase large chain (1081 aa).

Positions 1–410 are carboxyphosphate synthetic domain; it reads MPKRTDIKTI…SFQKALRGLE (410 aa). Residues R129, R176, G182, G183, E215, L217, E222, G248, I249, H250, Q292, and E306 each coordinate ATP. Residues 133–335 form the ATP-grasp 1 domain; that stretch reads KEAMTKIGLG…IAKVAAKLAV (203 aa). Q292, E306, and N308 together coordinate Mg(2+). Mn(2+) is bound by residues Q292, E306, and N308. Residues 411–558 are oligomerization domain; it reads VGVDGLDEKS…YEAEHGECEA (148 aa). Positions 559–944 are carbamoyl phosphate synthetic domain; that stretch reads DPTERKKIMV…ALFKSQLAAG (386 aa). The ATP-grasp 2 domain maps to 683-878; sequence QKLLHDLGLR…LAKVAARCMA (196 aa). ATP is bound by residues R719, R758, L760, E765, G790, V791, H792, S793, Q833, and E849. Mg(2+) is bound by residues Q833, E849, and N851. Mn(2+)-binding residues include Q833, E849, and N851. Residues 945–1081 enclose the MGS-like domain; that stretch reads SRLPEKGTVL…YDLQGLHASL (137 aa). The interval 945–1081 is allosteric domain; that stretch reads SRLPEKGTVL…YDLQGLHASL (137 aa).

It belongs to the CarB family. As to quaternary structure, composed of two chains; the small (or glutamine) chain promotes the hydrolysis of glutamine to ammonia, which is used by the large (or ammonia) chain to synthesize carbamoyl phosphate. Tetramer of heterodimers (alpha,beta)4. Mg(2+) serves as cofactor. The cofactor is Mn(2+).

The catalysed reaction is hydrogencarbonate + L-glutamine + 2 ATP + H2O = carbamoyl phosphate + L-glutamate + 2 ADP + phosphate + 2 H(+). The enzyme catalyses hydrogencarbonate + NH4(+) + 2 ATP = carbamoyl phosphate + 2 ADP + phosphate + 2 H(+). The protein operates within amino-acid biosynthesis; L-arginine biosynthesis; carbamoyl phosphate from bicarbonate: step 1/1. It participates in pyrimidine metabolism; UMP biosynthesis via de novo pathway; (S)-dihydroorotate from bicarbonate: step 1/3. Functionally, large subunit of the glutamine-dependent carbamoyl phosphate synthetase (CPSase). CPSase catalyzes the formation of carbamoyl phosphate from the ammonia moiety of glutamine, carbonate, and phosphate donated by ATP, constituting the first step of 2 biosynthetic pathways, one leading to arginine and/or urea and the other to pyrimidine nucleotides. The large subunit (synthetase) binds the substrates ammonia (free or transferred from glutamine from the small subunit), hydrogencarbonate and ATP and carries out an ATP-coupled ligase reaction, activating hydrogencarbonate by forming carboxy phosphate which reacts with ammonia to form carbamoyl phosphate. This is Carbamoyl phosphate synthase large chain from Ralstonia nicotianae (strain ATCC BAA-1114 / GMI1000) (Ralstonia solanacearum).